A 1072-amino-acid polypeptide reads, in one-letter code: Carbamoyl phosphate synthase large chain (1072 aa).

Residues 1 to 401 (MPKRLDINTI…SLLKAVRSLE (401 aa)) form a carboxyphosphate synthetic domain region. The ATP site is built by R129, R169, G175, G176, K208, I210, E215, G241, V242, H243, Q284, and E298. Residues 133–327 (RTLMQELNEP…IAKLAAKIAV (195 aa)) form the ATP-grasp 1 domain. Positions 284, 298, and 300 each coordinate Mg(2+). Residues Q284, E298, and N300 each contribute to the Mn(2+) site. Residues 402 to 546 (LGIYHLELDH…YSTYADENES (145 aa)) are oligomerization domain. The segment at 547–929 (IVTDRKSVVV…ALYKGLVASG (383 aa)) is carbamoyl phosphate synthetic domain. Residues 671–861 (EAALTKLGIP…MANVATKVIL (191 aa)) form the ATP-grasp 2 domain. ATP-binding residues include R707, R746, E752, G777, V778, H779, S780, Q820, and E832. Mg(2+)-binding residues include Q820, E832, and N834. Q820, E832, and N834 together coordinate Mn(2+). The MGS-like domain maps to 930 to 1072 (INIPTHGSVI…QTKRHEVVHA (143 aa)). Residues 930–1072 (INIPTHGSVI…QTKRHEVVHA (143 aa)) are allosteric domain.

It belongs to the CarB family. In terms of assembly, composed of two chains; the small (or glutamine) chain promotes the hydrolysis of glutamine to ammonia, which is used by the large (or ammonia) chain to synthesize carbamoyl phosphate. Tetramer of heterodimers (alpha,beta)4. Mg(2+) is required as a cofactor. The cofactor is Mn(2+).

It carries out the reaction hydrogencarbonate + L-glutamine + 2 ATP + H2O = carbamoyl phosphate + L-glutamate + 2 ADP + phosphate + 2 H(+). It catalyses the reaction hydrogencarbonate + NH4(+) + 2 ATP = carbamoyl phosphate + 2 ADP + phosphate + 2 H(+). It participates in amino-acid biosynthesis; L-arginine biosynthesis; carbamoyl phosphate from bicarbonate: step 1/1. The protein operates within pyrimidine metabolism; UMP biosynthesis via de novo pathway; (S)-dihydroorotate from bicarbonate: step 1/3. Functionally, large subunit of the glutamine-dependent carbamoyl phosphate synthetase (CPSase). CPSase catalyzes the formation of carbamoyl phosphate from the ammonia moiety of glutamine, carbonate, and phosphate donated by ATP, constituting the first step of 2 biosynthetic pathways, one leading to arginine and/or urea and the other to pyrimidine nucleotides. The large subunit (synthetase) binds the substrates ammonia (free or transferred from glutamine from the small subunit), hydrogencarbonate and ATP and carries out an ATP-coupled ligase reaction, activating hydrogencarbonate by forming carboxy phosphate which reacts with ammonia to form carbamoyl phosphate. This is Carbamoyl phosphate synthase large chain from Bacillus thuringiensis subsp. konkukian (strain 97-27).